Reading from the N-terminus, the 288-residue chain is uncharacterized protein (288 aa).

The region spanning 107–288 (KQIPTLIGPQ…LAIQLLASIA (182 aa)) is the ATP-grasp domain. Residues Lys-145 and 178–188 (QQYIATSNSEA) each bind ATP. 3 residues coordinate Mg(2+): Asp-248, Glu-261, and Asn-263. Residues Asp-248, Glu-261, and Asn-263 each contribute to the Mn(2+) site.

It belongs to the RimK family.

This is an uncharacterized protein from Mycoplasma pneumoniae (strain ATCC 29342 / M129 / Subtype 1) (Mycoplasmoides pneumoniae).